A 238-amino-acid polypeptide reads, in one-letter code: Proteasome subunit beta type-6 (238 aa).

An N-acetylalanine modification is found at Ala-2. The propeptide at 2 to 33 (AAALAVRGAVSAPAFGPEALTPDWENREVSTG) is removed in mature form. Thr-34 functions as the Nucleophile in the catalytic mechanism. Phosphothreonine is present on Thr-68.

It belongs to the peptidase T1B family. In terms of assembly, the 26S proteasome consists of a 20S proteasome core and two 19S regulatory subunits. The 20S proteasome core is a barrel-shaped complex made of 28 subunits that are arranged in four stacked rings. The two outer rings are each formed by seven alpha subunits, and the two inner rings are formed by seven beta subunits. The proteolytic activity is exerted by three beta-subunits PSMB5, PSMB6 and PSMB7.

It is found in the cytoplasm. Its subcellular location is the nucleus. The catalysed reaction is Cleavage of peptide bonds with very broad specificity.. Its function is as follows. Component of the 20S core proteasome complex involved in the proteolytic degradation of most intracellular proteins. This complex plays numerous essential roles within the cell by associating with different regulatory particles. Associated with two 19S regulatory particles, forms the 26S proteasome and thus participates in the ATP-dependent degradation of ubiquitinated proteins. The 26S proteasome plays a key role in the maintenance of protein homeostasis by removing misfolded or damaged proteins that could impair cellular functions, and by removing proteins whose functions are no longer required. Associated with the PA200 or PA28, the 20S proteasome mediates ubiquitin-independent protein degradation. This type of proteolysis is required in several pathways including spermatogenesis (20S-PA200 complex) or generation of a subset of MHC class I-presented antigenic peptides (20S-PA28 complex). Within the 20S core complex, PSMB6 displays a peptidylglutamyl-hydrolyzing activity also termed postacidic or caspase-like activity, meaning that the peptides bond hydrolysis occurs directly after acidic residues. In Rattus norvegicus (Rat), this protein is Proteasome subunit beta type-6 (Psmb6).